The chain runs to 484 residues: BPI fold-containing family B member 1 (484 aa).

The N-terminal stretch at 1 to 21 is a signal peptide; sequence MAGPWTFTLLCGLLAATLIQA. The N-linked (GlcNAc...) asparagine glycan is linked to asparagine 48. Cysteine 158 and cysteine 201 are oxidised to a cystine. Asparagine 264 and asparagine 401 each carry an N-linked (GlcNAc...) asparagine glycan.

The protein belongs to the BPI/LBP/Plunc superfamily. Plunc family. In terms of tissue distribution, detected in duodenum mucosal crypts of cholera patients, near Paneth cells (at protein level). Detected in trachea, nasal septal epithelium and lung.

The protein localises to the secreted. Functionally, may play a role in innate immunity in mouth, nose and lungs. Binds bacterial lipopolysaccharide (LPS) and modulates the cellular responses to LPS. The sequence is that of BPI fold-containing family B member 1 (BPIFB1) from Homo sapiens (Human).